The chain runs to 1025 residues: Error-prone DNA polymerase (1025 aa).

It belongs to the DNA polymerase type-C family. DnaE2 subfamily.

Its subcellular location is the cytoplasm. The catalysed reaction is DNA(n) + a 2'-deoxyribonucleoside 5'-triphosphate = DNA(n+1) + diphosphate. Functionally, DNA polymerase involved in damage-induced mutagenesis and translesion synthesis (TLS). It is not the major replicative DNA polymerase. The protein is Error-prone DNA polymerase of Alkalilimnicola ehrlichii (strain ATCC BAA-1101 / DSM 17681 / MLHE-1).